A 251-amino-acid chain; its full sequence is MSGSNPKAATAGSQAGPGGLVAGKEEKKKAGGGVLNRLKARRQGPPHTPDDGSGAAVTEQELLALDTIRPEHVLRLNRVTENYLCKPEDNVYSIDFTRFKIRDLETGTVLFEIAKPCISDQDQDAEEESVDVDISVGRFVRYQFTPAFLRLRTVGATVEFTVGDRPVTGFRMIERHYFRERLLKTFDFDFGFCIPSSRNTCEHIYEFPQLSEDVIRLMIENPYETRSDSFYFVDNKLVMHNKADYAYNGGQ.

A compositionally biased stretch (polar residues) spans 1–13 (MSGSNPKAATAGS). The disordered stretch occupies residues 1-56 (MSGSNPKAATAGSQAGPGGLVAGKEEKKKAGGGVLNRLKARRQGPPHTPDDGSGAA). Residue serine 2 is modified to N-acetylserine. An N6-acetyllysine modification is found at lysine 24. Residue tyrosine 142 participates in tetradecanoate binding.

The protein belongs to the PDE6D/unc-119 family. Found in a complex with ARL3, RP2 and UNC119B; RP2 induces hydrolysis of GTP ARL3 in the complex, leading to the release of UNC119B. Interacts with NPHP3 (when myristoylated). Interacts with CYS1 (when myristoylated). Interacts with MACIR; interaction only takes place when UNC119B is not liganded with myristoylated proteins.

The protein localises to the cell projection. It is found in the cilium. Functionally, myristoyl-binding protein that acts as a cargo adapter: specifically binds the myristoyl moiety of a subset of N-terminally myristoylated proteins and is required for their localization. Binds myristoylated NPHP3 and plays a key role in localization of NPHP3 to the primary cilium membrane. Does not bind all myristoylated proteins. Probably plays a role in trafficking proteins in photoreceptor cells. This is Protein unc-119 homolog B (Unc119b) from Mus musculus (Mouse).